A 239-amino-acid chain; its full sequence is Ribonuclease 3 (239 aa).

The RNase III domain maps to 11–133 (HAAIQKKLGY…MFAAVSFDAD (123 aa)). Glu-46 is a Mg(2+) binding site. Asp-50 is a catalytic residue. Positions 119 and 122 each coordinate Mg(2+). Glu-122 is an active-site residue. The 71-residue stretch at 160-230 (DGKTALQEAL…AKEALKWLEE (71 aa)) folds into the DRBM domain.

It belongs to the ribonuclease III family. In terms of assembly, homodimer. The cofactor is Mg(2+).

It is found in the cytoplasm. It carries out the reaction Endonucleolytic cleavage to 5'-phosphomonoester.. Its function is as follows. Digests double-stranded RNA. Involved in the processing of primary rRNA transcript to yield the immediate precursors to the large and small rRNAs (23S and 16S). Also processes some mRNAs, and tRNAs when they are encoded in the rRNA operon. In terms of biological role, CRISPR (clustered regularly interspaced short palindromic repeat) is an adaptive immune system that provides protection against mobile genetic elements (viruses, transposable elements and conjugative plasmids). CRISPR clusters contain spacers, sequences complementary to antecedent mobile elements, and target invading nucleic acids. CRISPR clusters are transcribed and processed into CRISPR RNA (crRNA). In this organism endogenous ribonuclease 3 and Cas9 are required for correct coprocessing of pre-crRNA and the trans-encoded small RNA (tracrRNA). Cas9, crRNA and tracrRNA are required for cleavage of invading DNA. Complements pre-crRNA and tracrRNA coprocessing defects in an rnc deletion in S.pyogenes strain 370. The sequence is that of Ribonuclease 3 from Neisseria meningitidis serogroup A / serotype 4A (strain DSM 15465 / Z2491).